The chain runs to 393 residues: Proteasome-activating nucleotidase (393 aa).

Residues 14 to 53 (SDEVQLVRLLEEKIKSLQIEIENLRKELNYYKAEMEKMLS) adopt a coiled-coil conformation. ATP contacts are provided by residues 178–183 (GTGKTM) and Tyr317. The docks into pockets in the proteasome alpha-ring to cause gate opening stretch occupies residues 391 to 393 (KYS).

Belongs to the AAA ATPase family. In terms of assembly, homohexamer. The hexameric complex has a two-ring architecture resembling a top hat that caps the 20S proteasome core at one or both ends. Upon ATP-binding, the C-terminus of PAN interacts with the alpha-rings of the proteasome core by binding to the intersubunit pockets.

It localises to the cytoplasm. In terms of biological role, ATPase which is responsible for recognizing, binding, unfolding and translocation of substrate proteins into the archaeal 20S proteasome core particle. Is essential for opening the gate of the 20S proteasome via an interaction with its C-terminus, thereby allowing substrate entry and access to the site of proteolysis. Thus, the C-termini of the proteasomal ATPase function like a 'key in a lock' to induce gate opening and therefore regulate proteolysis. Unfolding activity requires energy from ATP hydrolysis, whereas ATP binding alone promotes ATPase-20S proteasome association which triggers gate opening, and supports translocation of unfolded substrates. In Saccharolobus islandicus (strain Y.N.15.51 / Yellowstone #2) (Sulfolobus islandicus), this protein is Proteasome-activating nucleotidase.